Reading from the N-terminus, the 257-residue chain is Ubiquinone biosynthesis O-methyltransferase (257 aa).

Positions 43, 77, 98, and 144 each coordinate S-adenosyl-L-methionine.

It belongs to the methyltransferase superfamily. UbiG/COQ3 family.

It catalyses the reaction a 3-demethylubiquinol + S-adenosyl-L-methionine = a ubiquinol + S-adenosyl-L-homocysteine + H(+). The enzyme catalyses a 3-(all-trans-polyprenyl)benzene-1,2-diol + S-adenosyl-L-methionine = a 2-methoxy-6-(all-trans-polyprenyl)phenol + S-adenosyl-L-homocysteine + H(+). It participates in cofactor biosynthesis; ubiquinone biosynthesis. In terms of biological role, O-methyltransferase that catalyzes the 2 O-methylation steps in the ubiquinone biosynthetic pathway. The chain is Ubiquinone biosynthesis O-methyltransferase from Psychrobacter arcticus (strain DSM 17307 / VKM B-2377 / 273-4).